A 254-amino-acid chain; its full sequence is Segregation and condensation protein A (254 aa).

The protein belongs to the ScpA family. In terms of assembly, component of a cohesin-like complex composed of ScpA, ScpB and the Smc homodimer, in which ScpA and ScpB bind to the head domain of Smc. The presence of the three proteins is required for the association of the complex with DNA.

The protein localises to the cytoplasm. Functionally, participates in chromosomal partition during cell division. May act via the formation of a condensin-like complex containing Smc and ScpB that pull DNA away from mid-cell into both cell halves. The protein is Segregation and condensation protein A of Clostridium tetani (strain Massachusetts / E88).